Consider the following 168-residue polypeptide: Ribosome maturation factor RimP (168 aa).

Belongs to the RimP family.

It is found in the cytoplasm. Its function is as follows. Required for maturation of 30S ribosomal subunits. In Bordetella parapertussis (strain 12822 / ATCC BAA-587 / NCTC 13253), this protein is Ribosome maturation factor RimP.